The sequence spans 423 residues: tRNA-dihydrouridine(16/17) synthase [NAD(P)(+)] (423 aa).

The residue at position 2 (Thr2) is an N-acetylthreonine. Residues 35 to 37 (PMV) and Gln92 each bind FMN. The active-site Proton donor is Cys121. FMN is bound by residues Lys160, His188, 223 to 225 (NGN), and 247 to 248 (AE). The segment at 404–423 (KKRKADVPLESADKKKDVKA) is disordered. Over residues 408–423 (ADVPLESADKKKDVKA) the composition is skewed to basic and acidic residues.

Belongs to the Dus family. Dus1 subfamily. Monomer. FMN is required as a cofactor.

The enzyme catalyses 5,6-dihydrouridine(16) in tRNA + NADP(+) = uridine(16) in tRNA + NADPH + H(+). It carries out the reaction 5,6-dihydrouridine(16) in tRNA + NAD(+) = uridine(16) in tRNA + NADH + H(+). It catalyses the reaction 5,6-dihydrouridine(17) in tRNA + NAD(+) = uridine(17) in tRNA + NADH + H(+). The catalysed reaction is 5,6-dihydrouridine(17) in tRNA + NADP(+) = uridine(17) in tRNA + NADPH + H(+). The enzyme catalyses a 5,6-dihydrouridine in mRNA + NAD(+) = a uridine in mRNA + NADH + H(+). It carries out the reaction a 5,6-dihydrouridine in mRNA + NADP(+) = a uridine in mRNA + NADPH + H(+). Functionally, catalyzes the synthesis of dihydrouridine, a modified base found in the D-loop of most tRNAs. Specifically modifies U16 and U17 in cytoplasmic tRNAs. Also able to mediate dihydrouridylation of some mRNAs, thereby affecting their translation. This Saccharomyces cerevisiae (strain ATCC 204508 / S288c) (Baker's yeast) protein is tRNA-dihydrouridine(16/17) synthase [NAD(P)(+)].